We begin with the raw amino-acid sequence, 309 residues long: CDK-activating kinase assembly factor MAT1 (309 aa).

The residue at position 1 (Met1) is an N-acetylmethionine. The RING-type zinc-finger motif lies at 6 to 50 (CPRCKTTKYRNPSLKLMVNVCGHTLCESCVDLLFVRGAGNCPECG). Phosphothreonine is present on Thr51. Residues 142–161 (REQEELEEALEVERQEHEQR) enclose the UIM domain. The residue at position 279 (Ser279) is a Phosphoserine.

In terms of assembly, associates primarily with CDK7 and cyclin H to form the CAK complex. CAK can further associate with the core-TFIIH to form the TFIIH basal transcription factor.

It localises to the nucleus. Its function is as follows. Stabilizes the cyclin H-CDK7 complex to form a functional CDK-activating kinase (CAK) enzymatic complex. CAK activates the cyclin-associated kinases CDK1, CDK2, CDK4 and CDK6 by threonine phosphorylation. CAK complexed to the core-TFIIH basal transcription factor activates RNA polymerase II by serine phosphorylation of the repetitive C-terminal domain (CTD) of its large subunit (POLR2A), allowing its escape from the promoter and elongation of the transcripts. Involved in cell cycle control and in RNA transcription by RNA polymerase II. The sequence is that of CDK-activating kinase assembly factor MAT1 (Mnat1) from Mus musculus (Mouse).